The following is a 266-amino-acid chain: uncharacterized protein (266 aa).

The next 8 membrane-spanning stretches (helical) occupy residues 9–29 (IAALLAVLSISMVLGIDLFIF), 37–57 (TMPHLGVGVLVAQLISLLVFY), 69–89 (LIKVNMTFAIYWAVWLLISLL), 123–143 (FLLMAALIAGLGCLSYLMIFT), 153–173 (YNPFAPILSGVILANLVLVIA), 184–204 (LPLAMIILLALNALAMFLFLL), 216–236 (SVFAYIIYFVCHFVIAAILIL), and 246–266 (TNSLFILLFIAVCLPLWMVFV).

The protein localises to the cell membrane. This is an uncharacterized protein from Haemophilus influenzae (strain ATCC 51907 / DSM 11121 / KW20 / Rd).